The chain runs to 542 residues: Protein MGF 505-11L (542 aa).

Belongs to the asfivirus MGF 505 family.

Plays a role in virus cell tropism, and may be required for efficient virus replication in macrophages. The protein is Protein MGF 505-11L of Ornithodoros (relapsing fever ticks).